We begin with the raw amino-acid sequence, 360 residues long: Deoxyhypusine hydroxylase (360 aa).

HEAT-like PBS-type repeat units follow at residues 56–82 (LKHE…ILQD), 89–115 (VRHE…YRSD), and 213–245 (ERYR…GLQD). Residues His-58, Glu-59, His-91, and Glu-92 each contribute to the Fe cation site. Fe cation-binding residues include His-252, Glu-253, His-285, and Glu-286.

This sequence belongs to the deoxyhypusine hydroxylase family. The cofactor is Fe(2+).

Its subcellular location is the cytoplasm. It is found in the nucleus. The enzyme catalyses [eIF5A protein]-deoxyhypusine + AH2 + O2 = [eIF5A protein]-hypusine + A + H2O. Its pathway is protein modification; eIF5A hypusination. Functionally, catalyzes the hydroxylation of the N(6)-(4-aminobutyl)-L-lysine intermediate to form hypusine, an essential post-translational modification only found in mature eIF-5A factor. The protein is Deoxyhypusine hydroxylase of Mycosarcoma maydis (Corn smut fungus).